The sequence spans 330 residues: Bifunctional pinoresinol-lariciresinol reductase 2 (330 aa).

NADP(+) is bound by residues 28–34, arginine 53, and lysine 62; that span reads GGTGYLG. The active-site Proton acceptor is lysine 156. Arginine 160 is an NADP(+) binding site. Histidine 288 is a substrate binding site.

This sequence belongs to the NmrA-type oxidoreductase family. Isoflavone reductase subfamily. As to quaternary structure, dimer. As to expression, expressed in leaves, stems, leaves and seeds.

It catalyses the reaction (+)-lariciresinol + NADP(+) = (+)-pinoresinol + NADPH + H(+). The enzyme catalyses (-)-secoisolariciresinol + NADP(+) = (+)-lariciresinol + NADPH + H(+). Reductase involved in lignan biosynthesis. Catalyzes the enantioselective conversion of (+)-pinoresinol into (+)-lariciresinol and of (+)-lariciresinol into (-)-secoisolariciresinol. Abstracts the 4R-hydride from the NADPH cofactor during catalysis. This Linum usitatissimum (Flax) protein is Bifunctional pinoresinol-lariciresinol reductase 2 (PLR_Lu2).